We begin with the raw amino-acid sequence, 72 residues long: Translation initiation factor IF-1 (72 aa).

One can recognise an S1-like domain in the interval 1 to 72 (MSKEDMIEFS…SKGRITFRFK (72 aa)).

It belongs to the IF-1 family. As to quaternary structure, component of the 30S ribosomal translation pre-initiation complex which assembles on the 30S ribosome in the order IF-2 and IF-3, IF-1 and N-formylmethionyl-tRNA(fMet); mRNA recruitment can occur at any time during PIC assembly.

It localises to the cytoplasm. Its function is as follows. One of the essential components for the initiation of protein synthesis. Stabilizes the binding of IF-2 and IF-3 on the 30S subunit to which N-formylmethionyl-tRNA(fMet) subsequently binds. Helps modulate mRNA selection, yielding the 30S pre-initiation complex (PIC). Upon addition of the 50S ribosomal subunit IF-1, IF-2 and IF-3 are released leaving the mature 70S translation initiation complex. The chain is Translation initiation factor IF-1 from Gluconacetobacter diazotrophicus (strain ATCC 49037 / DSM 5601 / CCUG 37298 / CIP 103539 / LMG 7603 / PAl5).